Reading from the N-terminus, the 816-residue chain is Mitogen-activated protein kinase 7 (816 aa).

The segment at 1 to 26 is disordered; sequence MAEPLKEEDGEDGSAEPPGPVKAEPA. The residue at position 2 (Ala2) is an N-acetylalanine. Residues 2–77 are required for cytoplasmic targeting; it reads AEPLKEEDGE…VVSSARRRLT (76 aa). A Protein kinase domain is found at 55 to 347; sequence YEIIETIGNG…AAAALRHPFL (293 aa). ATP contacts are provided by residues 61–69 and Lys84; that span reads IGNGAYGVV. The tract at residues 78–139 is required for binding to MAP2K5; the sequence is GQQVAIKKIP…FKSVYVVLDL (62 aa). The segment at 140–406 is necessary for oligomerization; the sequence is MESDLHQIIH…QQIRFQPSLQ (267 aa). Asp182 acts as the Proton acceptor in catalysis. The TXY motif lies at 219–221; sequence TEY. The segment at 406–737 is disordered; it reads QPVASEPGCP…PVFSGTPKGS (332 aa). The may not be required for kinase activity; required to stimulate MEF2C activity stretch occupies residues 407-806; that stretch reads PVASEPGCPD…REIQMDSPML (400 aa). Composition is skewed to pro residues over residues 433–445 and 454–463; these read SPPP…PGPA and QPPPPVSEPA. The span at 476–486 shows a compositional bias: low complexity; sequence KAALKAALLKS. Composition is skewed to basic and acidic residues over residues 502 to 519, 527 to 544, and 563 to 573; these read PEPR…EREE, RAKE…KERG, and DNDRSLLERWT. Positions 505–539 match the Nuclear localization signal motif; sequence RKPVTAQERQREREEKRRRRQERAKEREKRRQERE. A compositionally biased stretch (low complexity) spans 578 to 587; sequence PAAPALTSVP. Pro residues-rich tracts occupy residues 588–610 and 628–655; these read APAP…PGPV and VPQP…PAPP. Residues 676–685 show a composition bias toward low complexity; that stretch reads PGSSTPGVLP. Over residues 686-695 the composition is skewed to pro residues; that stretch reads YFPPGLPPPD. Residues 701–720 are compositionally biased toward polar residues; the sequence is QSSMSESPDVNLVTQQLSKS. A Phosphoserine modification is found at Ser720. Thr733 carries the phosphothreonine modification.

This sequence belongs to the protein kinase superfamily. CMGC Ser/Thr protein kinase family. MAP kinase subfamily. As to quaternary structure, interacts with MAP2K5. Forms oligomers. Interacts with MEF2A, MEF2C and MEF2D; the interaction phosphorylates the MEF2s and enhances transcriptional activity of MEF2A, MEF2C but not MEF2D. Interacts with SGK1. Preferentially interacts with PML isoform PML-4 but shows interaction also with its other isoforms: isoform PML-1, isoform PML-2, isoform PML-3 and isoform PML-6. Interacts (via N-terminal half) with HSP90AB1-CDC37 chaperone complex in resting cells; the interaction is MAP2K5-independent and prevents MAPK7 from ubiquitination and proteasomal degradation. Interacts with STUB1/CHIP; the interaction is enhanced in the presence of IGF1 or MAP2K5 and promotes STUB1/CHIP E3 ligase activity. The cofactor is Mg(2+). Post-translationally, dually phosphorylated on Thr-219 and Tyr-221, which activates the enzyme. Autophosphorylated in vitro on threonine and tyrosine residues when the C-terminal part of the kinase, which could have a regulatory role, is absent. In terms of tissue distribution, expressed in many adult tissues. Abundant in heart, placenta, lung, kidney and skeletal muscle. Not detectable in liver.

Its subcellular location is the cytoplasm. It is found in the nucleus. It localises to the PML body. It carries out the reaction L-seryl-[protein] + ATP = O-phospho-L-seryl-[protein] + ADP + H(+). The enzyme catalyses L-threonyl-[protein] + ATP = O-phospho-L-threonyl-[protein] + ADP + H(+). Activated by tyrosine and threonine phosphorylation. Activated in response to hyperosmolarity, hydrogen peroxide, and epidermal growth factor (EGF). Functionally, plays a role in various cellular processes such as proliferation, differentiation and cell survival. The upstream activator of MAPK7 is the MAPK kinase MAP2K5. Upon activation, it translocates to the nucleus and phosphorylates various downstream targets including MEF2C. EGF activates MAPK7 through a Ras-independent and MAP2K5-dependent pathway. As part of the MAPK/ERK signaling pathway, acts as a negative regulator of apoptosis in cardiomyocytes via interaction with STUB1/CHIP and promotion of STUB1-mediated ubiquitination and degradation of ICER-type isoforms of CREM. May have a role in muscle cell differentiation. May be important for endothelial function and maintenance of blood vessel integrity. MAP2K5 and MAPK7 interact specifically with one another and not with MEK1/ERK1 or MEK2/ERK2 pathways. Phosphorylates SGK1 at Ser-78 and this is required for growth factor-induced cell cycle progression. Involved in the regulation of p53/TP53 by disrupting the PML-MDM2 interaction. This chain is Mitogen-activated protein kinase 7 (MAPK7), found in Homo sapiens (Human).